The sequence spans 73 residues: UPF0235 protein SYO3AOP1_0257 (73 aa).

Belongs to the UPF0235 family.

The polypeptide is UPF0235 protein SYO3AOP1_0257 (Sulfurihydrogenibium sp. (strain YO3AOP1)).